The chain runs to 222 residues: Thiol:disulfide interchange protein DsbL (222 aa).

Residues 1–27 (MSAKWINSIFKSVVLTAALALPFTASA) form the signal peptide. Residues 28–221 (FTEGTDYMVL…MAQLVRELAT (194 aa)) enclose the Thioredoxin domain. An intrachain disulfide couples Cys-56 to Cys-59.

It belongs to the thioredoxin family. DsbL subfamily. As to quaternary structure, interacts with DsbI.

It is found in the periplasm. Involved in disulfide-bond formation. Acts by transferring its disulfide bond to other proteins. Part of a redox system composed of DsbI and DsbL that mediates formation of an essential disulfide bond in AssT. This Lelliottia amnigena (Enterobacter amnigenus) protein is Thiol:disulfide interchange protein DsbL.